The sequence spans 232 residues: Large ribosomal subunit protein uL1 (232 aa).

The protein belongs to the universal ribosomal protein uL1 family. As to quaternary structure, part of the 50S ribosomal subunit.

Binds directly to 23S rRNA. The L1 stalk is quite mobile in the ribosome, and is involved in E site tRNA release. Functionally, protein L1 is also a translational repressor protein, it controls the translation of the L11 operon by binding to its mRNA. The polypeptide is Large ribosomal subunit protein uL1 (Marinobacter nauticus (strain ATCC 700491 / DSM 11845 / VT8) (Marinobacter aquaeolei)).